The primary structure comprises 484 residues: MSVKGDIGVIGLAVMGQNLILNMNDHGFKVVAYNRTTSKVDEFLEGAAKGTNIIGAYSLEDLANKLEKPRKVMLMVRAGEVVDHFIDALLPHLEAGDIIIDGGNSNYPDTNRRVAALREKGIRFIGTGVSGGEEGARHGPSIMPGGNEEAWQFVKPVLQAISAKTEQGEPCCDWVGKDGAGHFVKMVHNGIEYGDMQLICEAYQFLKEGVGLSDDELQATFNEWRNTELDSYLIDITADILGYKDADGSRLVDKVLDTAGQKGTGKWTGINALDFGIPLTLITESVFARCVSAFKDQRVAASKLFHKTIGKVEGDKKVWIEAVRKALLASKIISYAQGFMLIREASEHFNWNINYGNTALLWREGCIIRSRFLGNIRDAYEANPDLIFLGSDSYFKGILENAMSDWRKVVAKSIEVGIPMPCMASAITFLDGYTSARLPANLLQAQRDYFGAHTYERTDKPRGEFFHTNWTGRGGNTASTTYDV.

NADP(+) is bound by residues 11 to 16 (GLAVMG), 34 to 36 (NRT), 76 to 78 (VRA), and Asn104. Residues Asn104 and 130–132 (SGG) contribute to the substrate site. The active-site Proton acceptor is Lys185. 188-189 (HN) contacts substrate. Glu192 functions as the Proton donor in the catalytic mechanism. The substrate site is built by Tyr193, Lys262, Arg289, Arg447, and His453.

This sequence belongs to the 6-phosphogluconate dehydrogenase family. In terms of assembly, homodimer.

It carries out the reaction 6-phospho-D-gluconate + NADP(+) = D-ribulose 5-phosphate + CO2 + NADPH. The protein operates within carbohydrate degradation; pentose phosphate pathway; D-ribulose 5-phosphate from D-glucose 6-phosphate (oxidative stage): step 3/3. Its function is as follows. Catalyzes the oxidative decarboxylation of 6-phosphogluconate to ribulose 5-phosphate and CO(2), with concomitant reduction of NADP to NADPH. This chain is 6-phosphogluconate dehydrogenase, decarboxylating, found in Aggregatibacter actinomycetemcomitans (Actinobacillus actinomycetemcomitans).